The following is a 1439-amino-acid chain: DNA-directed RNA polymerase subunit beta' (1439 aa).

The Zn(2+) site is built by C70, C72, C85, and C88. Mg(2+) contacts are provided by D504, D506, and D508. Positions 862, 936, 943, and 946 each coordinate Zn(2+).

Belongs to the RNA polymerase beta' chain family. In terms of assembly, the RNAP catalytic core consists of 2 alpha, 1 beta, 1 beta' and 1 omega subunit. When a sigma factor is associated with the core the holoenzyme is formed, which can initiate transcription. Mg(2+) serves as cofactor. It depends on Zn(2+) as a cofactor.

It catalyses the reaction RNA(n) + a ribonucleoside 5'-triphosphate = RNA(n+1) + diphosphate. In terms of biological role, DNA-dependent RNA polymerase catalyzes the transcription of DNA into RNA using the four ribonucleoside triphosphates as substrates. The protein is DNA-directed RNA polymerase subunit beta' of Gluconobacter oxydans (strain 621H) (Gluconobacter suboxydans).